A 36-amino-acid chain; its full sequence is Mu/omega-theraphotoxin-Pmu1a (36 aa).

3 disulfides stabilise this stretch: cysteine 2-cysteine 16, cysteine 9-cysteine 21, and cysteine 15-cysteine 29.

It belongs to the neurotoxin 10 (Hwtx-1) family. In terms of tissue distribution, expressed by the venom gland.

The protein resides in the secreted. Gating-modifier toxin that targets both voltage-gated sodium and calcium channels, with described activities on human Nav1.7/SCN9A (IC(50)=5.5-7 nM), hNav1.6/SCN10A (IC(50)=9.9 nM), hNav1.4/SCN4A (IC(50)=62.9 nM), hCav3.2/CACNA1H (IC(50)=955.4 nM or 63.5% inhibition at 10 uM), hCav3.1/CACNA1G (95.1% inhibition at 10 uM), hCav3.3/CACNA1I (90.8% inhibition at 10 uM). Acts on Cav3 currents mainly by inducing a strong depolarizing shift in the current-voltage curve. The polypeptide is Mu/omega-theraphotoxin-Pmu1a (Pterinochilus murinus (Mombasa golden starburst baboon spider)).